A 91-amino-acid chain; its full sequence is Small ribosomal subunit protein uS19 (91 aa).

It belongs to the universal ribosomal protein uS19 family.

In terms of biological role, protein S19 forms a complex with S13 that binds strongly to the 16S ribosomal RNA. In Pseudomonas paraeruginosa (strain DSM 24068 / PA7) (Pseudomonas aeruginosa (strain PA7)), this protein is Small ribosomal subunit protein uS19.